The following is a 363-amino-acid chain: Phosphoserine aminotransferase (363 aa).

Arg42 provides a ligand contact to L-glutamate. Residues 76 to 77 (GR), Trp102, Thr156, Asp175, and Gln198 each bind pyridoxal 5'-phosphate. N6-(pyridoxal phosphate)lysine is present on Lys199. 240–241 (NT) is a pyridoxal 5'-phosphate binding site.

Belongs to the class-V pyridoxal-phosphate-dependent aminotransferase family. SerC subfamily. As to quaternary structure, homodimer. Pyridoxal 5'-phosphate is required as a cofactor.

The protein resides in the cytoplasm. It catalyses the reaction O-phospho-L-serine + 2-oxoglutarate = 3-phosphooxypyruvate + L-glutamate. The catalysed reaction is 4-(phosphooxy)-L-threonine + 2-oxoglutarate = (R)-3-hydroxy-2-oxo-4-phosphooxybutanoate + L-glutamate. The protein operates within amino-acid biosynthesis; L-serine biosynthesis; L-serine from 3-phospho-D-glycerate: step 2/3. Its pathway is cofactor biosynthesis; pyridoxine 5'-phosphate biosynthesis; pyridoxine 5'-phosphate from D-erythrose 4-phosphate: step 3/5. Functionally, catalyzes the reversible conversion of 3-phosphohydroxypyruvate to phosphoserine and of 3-hydroxy-2-oxo-4-phosphonooxybutanoate to phosphohydroxythreonine. This is Phosphoserine aminotransferase from Shewanella baltica (strain OS195).